The primary structure comprises 375 residues: MSQLELSNRMLTLHRFPQMREESPLQAWDAADEYLLNHLDNLPVNGPTLIFNDTFGALACALAGEGVWSISDSWLNQQATRQNLALNQLDEGDVRLLDSLAPLPGAPARVLIKVPKTLALLEKQLRALRAVVTPETQIVAAGKAKEIHTSTLQLFEKILGPTTTSLAWKKARLIYATFTQPELAESEVISRWPLDGTPWQIHNHANVFARGGLDIGARFFMQHLPDDIDGEIVDLGCGNGVIGLMALRQNPLAQVHFLDESYMAVASSRMNVELNCPDDLARCEFRVNNALAGYPSDRLHAVLCNPPFHQQNAVTDHIAWQMFRDARRCLQYGGELRIVGNRHLDYYHKMKKLFGNCTTVATHQKFVILRSVKMP.

This sequence belongs to the methyltransferase superfamily. RlmG family.

It localises to the cytoplasm. The catalysed reaction is guanosine(1835) in 23S rRNA + S-adenosyl-L-methionine = N(2)-methylguanosine(1835) in 23S rRNA + S-adenosyl-L-homocysteine + H(+). In terms of biological role, specifically methylates the guanine in position 1835 (m2G1835) of 23S rRNA. The protein is Ribosomal RNA large subunit methyltransferase G of Erwinia tasmaniensis (strain DSM 17950 / CFBP 7177 / CIP 109463 / NCPPB 4357 / Et1/99).